The following is a 346-amino-acid chain: UPF0065 protein in the TAR-I ttuE-ttuC' intergenic region (346 aa).

Residues 1–46 (MQASMLDSQWRLTIFSPRRKVKVSQMNSRFIAVLLTATILPWVAQA) form the signal peptide.

The protein belongs to the UPF0065 (bug) family.

It localises to the periplasm. The chain is UPF0065 protein in the TAR-I ttuE-ttuC' intergenic region from Agrobacterium vitis (Rhizobium vitis).